We begin with the raw amino-acid sequence, 215 residues long: Phosphatidylserine decarboxylase proenzyme (215 aa).

S183 serves as the catalytic Schiff-base intermediate with substrate; via pyruvic acid. S183 bears the Pyruvic acid (Ser); by autocatalysis mark.

It belongs to the phosphatidylserine decarboxylase family. PSD-A subfamily. Heterodimer of a large membrane-associated beta subunit and a small pyruvoyl-containing alpha subunit. Pyruvate serves as cofactor. In terms of processing, is synthesized initially as an inactive proenzyme. Formation of the active enzyme involves a self-maturation process in which the active site pyruvoyl group is generated from an internal serine residue via an autocatalytic post-translational modification. Two non-identical subunits are generated from the proenzyme in this reaction, and the pyruvate is formed at the N-terminus of the alpha chain, which is derived from the carboxyl end of the proenzyme. The post-translation cleavage follows an unusual pathway, termed non-hydrolytic serinolysis, in which the side chain hydroxyl group of the serine supplies its oxygen atom to form the C-terminus of the beta chain, while the remainder of the serine residue undergoes an oxidative deamination to produce ammonia and the pyruvoyl prosthetic group on the alpha chain.

The protein localises to the cell membrane. It carries out the reaction a 1,2-diacyl-sn-glycero-3-phospho-L-serine + H(+) = a 1,2-diacyl-sn-glycero-3-phosphoethanolamine + CO2. It functions in the pathway phospholipid metabolism; phosphatidylethanolamine biosynthesis; phosphatidylethanolamine from CDP-diacylglycerol: step 2/2. Functionally, catalyzes the formation of phosphatidylethanolamine (PtdEtn) from phosphatidylserine (PtdSer). This Symbiobacterium thermophilum (strain DSM 24528 / JCM 14929 / IAM 14863 / T) protein is Phosphatidylserine decarboxylase proenzyme.